An 872-amino-acid chain; its full sequence is C-mannosyltransferase dpy-19 homolog (872 aa).

Transmembrane regions (helical) follow at residues 4 to 24 (PNLY…FLYV), 126 to 146 (FVWL…TLLS), 149 to 169 (IFGG…VAKI), 179 to 199 (FAFP…GRII), 211 to 231 (IFAM…STFI), 257 to 277 (VLDY…MSHG), 279 to 299 (SQLL…ITMV), 326 to 346 (FLML…ELFN), and 399 to 419 (VKTM…AMFF). A coiled-coil region spans residues 508 to 535 (KRLRAQINRNSVKQRKERAQETKEAATD). Residues 514-620 (INRNSVKQRK…RSSSRRSSVV (107 aa)) are disordered. Over residues 524 to 533 (ERAQETKEAA) the composition is skewed to basic and acidic residues. The span at 541–551 (TEEEDKDPEAE) shows a compositional bias: acidic residues. 2 helical membrane-spanning segments follow: residues 627–647 (ILNM…LIGL) and 678–698 (NIFW…PGMV).

Belongs to the dpy-19 family.

Its subcellular location is the membrane. Its function is as follows. Probable C-mannosyltransferase that mediates C-mannosylation of tryptophan residues on target proteins. This is C-mannosyltransferase dpy-19 homolog from Drosophila melanogaster (Fruit fly).